The following is a 493-amino-acid chain: 3-ketoacyl-CoA synthase 16 (493 aa).

A signal peptide spans 1-35; it reads MDYPMKKVKIFFNYLMAHRFKLCFLPLMVAIAVEA. Residues 52-74 traverse the membrane as a helical segment; the sequence is NNHTSLTMFFLYLALGSTLYLMT. Residues 71–366 form the FAE domain; sequence YLMTRPKPVY…FFVRFVKKKF (296 aa). Residues cysteine 221, histidine 300, histidine 384, histidine 388, histidine 417, and asparagine 421 contribute to the active site.

The protein belongs to the thiolase-like superfamily. Chalcone/stilbene synthases family. As to expression, expressed in siliques.

It localises to the membrane. The catalysed reaction is a very-long-chain acyl-CoA + malonyl-CoA + H(+) = a very-long-chain 3-oxoacyl-CoA + CO2 + CoA. The protein operates within lipid metabolism; fatty acid biosynthesis. The polypeptide is 3-ketoacyl-CoA synthase 16 (Arabidopsis thaliana (Mouse-ear cress)).